Consider the following 409-residue polypeptide: tRNA-specific 2-thiouridylase MnmA (409 aa).

ATP-binding positions include 40 to 47 and L66; that span reads GLSGGVDS. The Nucleophile role is filled by C127. The cysteines at positions 127 and 237 are disulfide-linked. G152 contacts ATP. Positions 187 to 189 are interaction with tRNA; that stretch reads KDQ. C237 functions as the Cysteine persulfide intermediate in the catalytic mechanism. Residues 342–343 are interaction with tRNA; the sequence is RY.

Belongs to the MnmA/TRMU family.

It is found in the cytoplasm. It carries out the reaction S-sulfanyl-L-cysteinyl-[protein] + uridine(34) in tRNA + AH2 + ATP = 2-thiouridine(34) in tRNA + L-cysteinyl-[protein] + A + AMP + diphosphate + H(+). In terms of biological role, catalyzes the 2-thiolation of uridine at the wobble position (U34) of tRNA, leading to the formation of s(2)U34. This Prochlorococcus marinus (strain MIT 9313) protein is tRNA-specific 2-thiouridylase MnmA.